Here is a 612-residue protein sequence, read N- to C-terminus: 1-deoxy-D-xylulose-5-phosphate synthase (612 aa).

Residues histidine 77 and 118 to 120 (GHS) contribute to the thiamine diphosphate site. A Mg(2+)-binding site is contributed by aspartate 147. Residues 148–149 (AA), asparagine 176, tyrosine 288, and glutamate 365 each bind thiamine diphosphate. Asparagine 176 is a Mg(2+) binding site.

The protein belongs to the transketolase family. DXPS subfamily. Homodimer. The cofactor is Mg(2+). Thiamine diphosphate is required as a cofactor.

It carries out the reaction D-glyceraldehyde 3-phosphate + pyruvate + H(+) = 1-deoxy-D-xylulose 5-phosphate + CO2. The protein operates within metabolic intermediate biosynthesis; 1-deoxy-D-xylulose 5-phosphate biosynthesis; 1-deoxy-D-xylulose 5-phosphate from D-glyceraldehyde 3-phosphate and pyruvate: step 1/1. Functionally, catalyzes the acyloin condensation reaction between C atoms 2 and 3 of pyruvate and glyceraldehyde 3-phosphate to yield 1-deoxy-D-xylulose-5-phosphate (DXP). The sequence is that of 1-deoxy-D-xylulose-5-phosphate synthase from Malacoplasma penetrans (strain HF-2) (Mycoplasma penetrans).